The chain runs to 155 residues: MFLSTYENKIDKKGRVSVPASFRSHLSNLGYNGVICYPSFNNQSIEACSQDRIEKLSASIDSLSPFEEKRDYFATSILSESMNLQFDSEGRISLSTKLLKHAKIKNSMLFVGQGQTFQIWEPAAFEKFKINARKKANLNRASLKWEKHFNNNEGK.

SpoVT-AbrB domains are found at residues 5–52 (TYEN…SQDR) and 81–124 (SMNL…EPAA).

The protein belongs to the MraZ family. As to quaternary structure, forms oligomers.

The protein resides in the cytoplasm. The protein localises to the nucleoid. This is Transcriptional regulator MraZ from Pelagibacter ubique (strain HTCC1062).